The following is a 335-amino-acid chain: tRNA-dihydrouridine(20/20a) synthase (335 aa).

FMN-binding positions include proline 20–leucine 22 and glutamine 72. The active-site Proton donor is cysteine 102. Residues lysine 141, histidine 173, asparagine 213 to glycine 215, and glycine 235 to arginine 236 contribute to the FMN site.

Belongs to the Dus family. DusA subfamily. Requires FMN as cofactor.

It carries out the reaction 5,6-dihydrouridine(20) in tRNA + NADP(+) = uridine(20) in tRNA + NADPH + H(+). The catalysed reaction is 5,6-dihydrouridine(20) in tRNA + NAD(+) = uridine(20) in tRNA + NADH + H(+). The enzyme catalyses 5,6-dihydrouridine(20a) in tRNA + NADP(+) = uridine(20a) in tRNA + NADPH + H(+). It catalyses the reaction 5,6-dihydrouridine(20a) in tRNA + NAD(+) = uridine(20a) in tRNA + NADH + H(+). Its function is as follows. Catalyzes the synthesis of 5,6-dihydrouridine (D), a modified base found in the D-loop of most tRNAs, via the reduction of the C5-C6 double bond in target uridines. Specifically modifies U20 and U20a in tRNAs. This Shewanella oneidensis (strain ATCC 700550 / JCM 31522 / CIP 106686 / LMG 19005 / NCIMB 14063 / MR-1) protein is tRNA-dihydrouridine(20/20a) synthase.